Reading from the N-terminus, the 295-residue chain is Acetylglutamate kinase (295 aa).

Substrate contacts are provided by residues 66–67 (GG), Arg88, and Asn193.

It belongs to the acetylglutamate kinase family. ArgB subfamily.

It localises to the cytoplasm. It catalyses the reaction N-acetyl-L-glutamate + ATP = N-acetyl-L-glutamyl 5-phosphate + ADP. Its pathway is amino-acid biosynthesis; L-arginine biosynthesis; N(2)-acetyl-L-ornithine from L-glutamate: step 2/4. Its function is as follows. Catalyzes the ATP-dependent phosphorylation of N-acetyl-L-glutamate. This is Acetylglutamate kinase from Rhizobium leguminosarum bv. trifolii (strain WSM2304).